The following is a 277-amino-acid chain: Intercellular adhesion molecule 2 (277 aa).

The N-terminal stretch at 1–22 (MSSFACWSLSLLILFYSPGSGE) is a signal peptide. Residues 23-222 (KAFEVYIWSE…EVYEPMQDNQ (200 aa)) lie on the Extracellular side of the membrane. 2 consecutive Ig-like C2-type domains span residues 39 to 98 (TESW…CSGK) and 127 to 196 (GEDF…LDLR). Residues N45, N82, N158, N176, and N186 are each glycosylated (N-linked (GlcNAc...) asparagine). Intrachain disulfides connect C46–C91, C50–C95, and C134–C189. The helical transmembrane segment at 223–247 (MVIIIVVVSILLFLFVTSVLLCFIF) threads the bilayer. At 248-277 (GQHWHRRRTGTYGVLAAWRRLPRAFRARPV) the chain is on the cytoplasmic side. The interval 250 to 277 (HWHRRRTGTYGVLAAWRRLPRAFRARPV) is required for interaction with EZR, MSN and RDX and co-localization to microvilli.

This sequence belongs to the immunoglobulin superfamily. ICAM family. In terms of assembly, interacts with RDX, EZR and MSN. As to expression, expressed in endothelial cells and leukocytes. High levels found in lung.

It localises to the membrane. The protein resides in the cell projection. The protein localises to the microvillus. ICAM proteins are ligands for the leukocyte adhesion protein LFA-1 (integrin alpha-L/beta-2). ICAM2 may play a role in lymphocyte recirculation by blocking LFA-1-dependent cell adhesion. It mediates adhesive interactions important for antigen-specific immune response, NK-cell mediated clearance, lymphocyte recirculation, and other cellular interactions important for immune response and surveillance. The chain is Intercellular adhesion molecule 2 (Icam2) from Mus musculus (Mouse).